A 1202-amino-acid polypeptide reads, in one-letter code: Putative late blight resistance protein homolog R1B-8 (1202 aa).

Coiled coils occupy residues 345-368 (RYSD…ESLQ) and 437-459 (LRMN…RLLN). In terms of domain architecture, NB-ARC spans 426 to 741 (IARTSSQLAR…ISESFIKSCE (316 aa)). Position 471-478 (471-478 (GMPGLGKT)) interacts with ATP. 7 LRR repeats span residues 865 to 889 (FKFL…LFYL), 908 to 936 (LWNL…VWDM), 1011 to 1036 (PIRL…ISAP), 1040 to 1059 (YLKL…TADH), 1060 to 1084 (LKHL…VSNG), 1086 to 1111 (FPQL…VFPN), and 1128 to 1151 (SCFM…VVQS).

The protein belongs to the disease resistance NB-LRR family.

The protein resides in the cytoplasm. It is found in the membrane. Functionally, confers resistance to late blight (Phytophthora infestans) races carrying the avirulence gene Avr1. Resistance proteins guard the plant against pathogens that contain an appropriate avirulence protein via an indirect interaction with this avirulence protein. That triggers a defense system including the hypersensitive response, which restricts the pathogen growth. This chain is Putative late blight resistance protein homolog R1B-8 (R1B-8), found in Solanum demissum (Wild potato).